The sequence spans 314 residues: Protoheme IX farnesyltransferase (314 aa).

8 helical membrane-spanning segments follow: residues 30–50 (VMSL…VSVH), 51–71 (PVIG…SGAL), 122–142 (FLAA…YSMW), 151–171 (IVIG…IATG), 178–198 (WLMF…LALF), 224–244 (IIAY…SAIG), 247–267 (VYLA…IDIW), and 285–305 (FFRL…LESA).

The protein belongs to the UbiA prenyltransferase family. Protoheme IX farnesyltransferase subfamily. Interacts with CtaA.

It localises to the cell inner membrane. The catalysed reaction is heme b + (2E,6E)-farnesyl diphosphate + H2O = Fe(II)-heme o + diphosphate. Its pathway is porphyrin-containing compound metabolism; heme O biosynthesis; heme O from protoheme: step 1/1. Functionally, converts heme B (protoheme IX) to heme O by substitution of the vinyl group on carbon 2 of heme B porphyrin ring with a hydroxyethyl farnesyl side group. This Roseobacter denitrificans (strain ATCC 33942 / OCh 114) (Erythrobacter sp. (strain OCh 114)) protein is Protoheme IX farnesyltransferase.